Here is a 68-residue protein sequence, read N- to C-terminus: UPF0434 protein BMA10229_A1047 (68 aa).

This sequence belongs to the UPF0434 family.

This is UPF0434 protein BMA10229_A1047 from Burkholderia mallei (strain NCTC 10229).